Here is a 398-residue protein sequence, read N- to C-terminus: Enoyl-[acyl-carrier-protein] reductase [NADH] (398 aa).

Residues 48-53, 74-75, 111-112, and 139-140 contribute to the NAD(+) site; these read GASTGY, FE, DA, and LA. Tyr-225 provides a ligand contact to substrate. Tyr-235 (proton donor) is an active-site residue. NAD(+)-binding positions include Lys-244 and 273–275; that span reads VVT.

It belongs to the TER reductase family. As to quaternary structure, monomer.

The enzyme catalyses a 2,3-saturated acyl-[ACP] + NAD(+) = a (2E)-enoyl-[ACP] + NADH + H(+). It functions in the pathway lipid metabolism; fatty acid biosynthesis. Functionally, involved in the final reduction of the elongation cycle of fatty acid synthesis (FAS II). Catalyzes the reduction of a carbon-carbon double bond in an enoyl moiety that is covalently linked to an acyl carrier protein (ACP). The sequence is that of Enoyl-[acyl-carrier-protein] reductase [NADH] from Paraburkholderia xenovorans (strain LB400).